The chain runs to 482 residues: PAN domain-containing protein At5g03700 (482 aa).

Residues 1 to 31 (MEGLCLNSFTRVLLLLFVFLVFSHKWQRVNA) form the signal peptide. One can recognise a PAN domain in the interval 330–411 (CDKTTEFKVV…SKLGYFKVRE (82 aa)). Disulfide bonds link cysteine 363/cysteine 385 and cysteine 367/cysteine 373. A helical membrane pass occupies residues 425–445 (GMSLLAVIALVLMVAMVYVGF).

It is found in the membrane. This chain is PAN domain-containing protein At5g03700, found in Arabidopsis thaliana (Mouse-ear cress).